The primary structure comprises 291 residues: Ribosomal RNA small subunit methyltransferase A (291 aa).

Histidine 21, leucine 23, glycine 48, glutamate 70, aspartate 95, and asparagine 115 together coordinate S-adenosyl-L-methionine.

This sequence belongs to the class I-like SAM-binding methyltransferase superfamily. rRNA adenine N(6)-methyltransferase family. RsmA subfamily.

It localises to the cytoplasm. The catalysed reaction is adenosine(1518)/adenosine(1519) in 16S rRNA + 4 S-adenosyl-L-methionine = N(6)-dimethyladenosine(1518)/N(6)-dimethyladenosine(1519) in 16S rRNA + 4 S-adenosyl-L-homocysteine + 4 H(+). Specifically dimethylates two adjacent adenosines (A1518 and A1519) in the loop of a conserved hairpin near the 3'-end of 16S rRNA in the 30S particle. May play a critical role in biogenesis of 30S subunits. The polypeptide is Ribosomal RNA small subunit methyltransferase A (Prochlorococcus marinus (strain NATL2A)).